The chain runs to 56 residues: Chymotrypsin inhibitor (56 aa).

Disulfide bonds link C3–C36, C12–C32, C16–C28, C20–C56, and C38–C50. Residues 3-56 (CGPNEVFNTCGSACAPTCAQPKTRICTMQCRIGCQCQEGFLRNGEGACVLPENC) form the TIL domain.

It belongs to the serine protease inhibitor-like (TIL domain-containing) family.

It localises to the secreted. Its function is as follows. Chymotrypsin and cathepsin G inhibitor. This Apis mellifera (Honeybee) protein is Chymotrypsin inhibitor.